Here is a 111-residue protein sequence, read N- to C-terminus: Toxin 3FTx-Tel4 (111 aa).

A signal peptide spans 1–19; sequence MKTLLLALVVVAFMCLGSA. Residues 20 to 34 constitute a propeptide that is removed on maturation; it reads DQLGLGSQRIDWEQG. Gln35 bears the Pyrrolidone carboxylic acid mark. Intrachain disulfides connect Cys44/Cys68, Cys47/Cys55, Cys61/Cys87, Cys91/Cys102, and Cys103/Cys108.

This sequence belongs to the three-finger toxin family. Ancestral subfamily. Boigatoxin sub-subfamily. As to expression, expressed by the venom gland.

It is found in the secreted. In terms of biological role, potent postsynaptic neurotoxin. Displays readily reversible competitive antagonism at the nicotinic acetylcholine receptor (nAChR). This is Toxin 3FTx-Tel4 from Telescopus dhara (Egyptian catsnake).